The primary structure comprises 341 residues: 5-formaminoimidazole-4-carboxamide-1-(beta)-D-ribofuranosyl 5'-monophosphate synthetase (341 aa).

2 residues coordinate 5-amino-1-(5-phospho-beta-D-ribosyl)imidazole-4-carboxamide: H27 and S92. The ATP-grasp domain occupies 113–328 (RELLRWEADQ…MGERIAHEIK (216 aa)). ATP is bound by residues 143-195 (AEEV…VPAY) and E217. A 5-amino-1-(5-phospho-beta-D-ribosyl)imidazole-4-carboxamide-binding site is contributed by N237. Residues E276 and E289 each coordinate Mg(2+).

Belongs to the phosphohexose mutase family. The cofactor is Mg(2+). It depends on Mn(2+) as a cofactor.

It catalyses the reaction 5-amino-1-(5-phospho-beta-D-ribosyl)imidazole-4-carboxamide + formate + ATP = 5-formamido-1-(5-phospho-D-ribosyl)imidazole-4-carboxamide + ADP + phosphate. The protein operates within purine metabolism; IMP biosynthesis via de novo pathway; 5-formamido-1-(5-phospho-D-ribosyl)imidazole-4-carboxamide from 5-amino-1-(5-phospho-D-ribosyl)imidazole-4-carboxamide (formate route): step 1/1. Catalyzes the ATP- and formate-dependent formylation of 5-aminoimidazole-4-carboxamide-1-beta-d-ribofuranosyl 5'-monophosphate (AICAR) to 5-formaminoimidazole-4-carboxamide-1-beta-d-ribofuranosyl 5'-monophosphate (FAICAR) in the absence of folates. This chain is 5-formaminoimidazole-4-carboxamide-1-(beta)-D-ribofuranosyl 5'-monophosphate synthetase, found in Pyrobaculum aerophilum (strain ATCC 51768 / DSM 7523 / JCM 9630 / CIP 104966 / NBRC 100827 / IM2).